The chain runs to 1194 residues: Rho-associated protein kinase let-502 (1194 aa).

The 263-residue stretch at 68-330 folds into the Protein kinase domain; that stretch reads FRQLKVIGRG…VDEIRNHKFF (263 aa). ATP is bound by residues 74-82 and Lys97; that span reads IGRGAFGEV. Asp190 acts as the Proton acceptor in catalysis. The region spanning 331–402 is the AGC-kinase C-terminal domain; it reads KNDEWTFETL…SNEYSPVKKL (72 aa). 2 coiled-coil regions span residues 436 to 844 and 875 to 933; these read EEQY…MAKR and GRIL…EYPQ. One can recognise a RhoBD domain in the interval 784–846; that stretch reads EQNLKHIENQ…LEEEMAKRQP (63 aa). One can recognise a PH domain in the interval 961–1171; it reads IQIDGWLSLR…SQLRRFIEAS (211 aa). The segment at 1085–1138 adopts a Phorbol-ester/DAG-type zinc-finger fold; it reads RHDFQELSYHTRTYCDDCGKKLSDFIRPTPAFECKNCHYKTHKEHIAQGTITMC.

It belongs to the protein kinase superfamily. AGC Ser/Thr protein kinase family. As to quaternary structure, interacts with rho-1. Requires Mg(2+) as cofactor.

It is found in the cytoplasm. The protein resides in the cytoskeleton. The protein localises to the cleavage furrow. It catalyses the reaction L-seryl-[protein] + ATP = O-phospho-L-seryl-[protein] + ADP + H(+). It carries out the reaction L-threonyl-[protein] + ATP = O-phospho-L-threonyl-[protein] + ADP + H(+). Activated by rho-1 binding. Its function is as follows. Negatively regulates mel-11 to relieve the inhibition of mlc-4, allowing contraction of the circumferentially oriented microfilaments in epidermal cells and thereby regulating myosin II contractility during spermathecal contraction, cleavage furrow contraction in early embryos, and embryonic elongation and morphogenesis. Required for P-cell migration. May also play a role in oocyte cellularization. This Caenorhabditis briggsae protein is Rho-associated protein kinase let-502.